Reading from the N-terminus, the 81-residue chain is Serine/arginine-rich splicing factor 6 (81 aa).

Positions 1–48 are enriched in basic residues; the sequence is RSRSRSRRSSRSRSRSISKSRSRSRSRSKGRSRSRSKGRKSRSKSKSK. Residues 1 to 81 are disordered; sequence RSRSRSRRSS…SRSRSRSRSP (81 aa). The segment covering 62–71 has biased composition (basic and acidic residues); the sequence is RSKDEYEKSR. Over residues 72 to 81 the composition is skewed to basic residues; it reads SRSRSRSRSP.

The protein belongs to the splicing factor SR family. As to quaternary structure, binds SREK1/SFRS12. Interacts with DYRK1A. Extensively phosphorylated on serine residues in the RS domain. Phosphorylated by DYRK1A, probably in the RS domain. Phosphorylation by DYRK1A modulates alternative splice site selection and inhibits the expression of MAPT/Tau exon 10.

The protein localises to the nucleus. Its subcellular location is the nucleus speckle. In terms of biological role, plays a role in constitutive splicing and modulates the selection of alternative splice sites. Plays a role in the alternative splicing of MAPT/Tau exon 10. Binds to alternative exons of TNC pre-mRNA and promotes the expression of alternatively spliced TNC. Plays a role in wound healing and in the regulation of keratinocyte differentiation and proliferation via its role in alternative splicing. The polypeptide is Serine/arginine-rich splicing factor 6 (SRSF6) (Oryctolagus cuniculus (Rabbit)).